Here is a 135-residue protein sequence, read N- to C-terminus: DNA-directed RNA polymerase subunit omega (135 aa).

Belongs to the RNA polymerase subunit omega family. The RNAP catalytic core consists of 2 alpha, 1 beta, 1 beta' and 1 omega subunit. When a sigma factor is associated with the core the holoenzyme is formed, which can initiate transcription.

The enzyme catalyses RNA(n) + a ribonucleoside 5'-triphosphate = RNA(n+1) + diphosphate. Promotes RNA polymerase assembly. Latches the N- and C-terminal regions of the beta' subunit thereby facilitating its interaction with the beta and alpha subunits. In Rhizobium meliloti (strain 1021) (Ensifer meliloti), this protein is DNA-directed RNA polymerase subunit omega.